The following is a 175-amino-acid chain: Thioredoxin-like protein CITRX, chloroplastic (175 aa).

The transit peptide at 1–64 (MQAASLAFHP…KPPAVGKYVR (64 aa)) directs the protein to the chloroplast. The region spanning 74–175 (AKEIQELIKG…MMRDIIDNDL (102 aa)) is the Thioredoxin domain. Active-site nucleophile residues include Cys-98 and Cys-101. An intrachain disulfide couples Cys-98 to Cys-101.

The protein belongs to the thioredoxin family. Plant CITRX-type subfamily. In terms of assembly, interacts with Cf-9 resistance protein.

The protein localises to the plastid. Its subcellular location is the chloroplast. Its function is as follows. Probable thiol-disulfide oxidoreductase that may play a role in proper chloroplast development. This Solanum lycopersicum (Tomato) protein is Thioredoxin-like protein CITRX, chloroplastic.